Consider the following 2193-residue polypeptide: ATP-dependent helicase BRM (2193 aa).

Met1 carries the N-acetylmethionine modification. Over residues 1–10 the composition is skewed to gly residues; the sequence is MQSGGSGGGP. 5 disordered regions span residues 1–126, 175–231, 293–466, 511–558, and 580–649; these read MQSG…QEGQ, MQDL…PGNM, QKAG…GFTK, SPAI…DNVG, and TSTD…ASAR. Residues 23–62 are compositionally biased toward low complexity; that stretch reads ASTSSAASPSSSSSSVQQQQQQQQQQQQQQQLASRQQQQQ. Positions 38–58 form a coiled coil; the sequence is VQQQQQQQQQQQQQQQLASRQ. A compositionally biased stretch (gly residues) spans 79–88; the sequence is GVQGMMGGGN. Low complexity-rich tracts occupy residues 91-102, 110-126, and 180-192; these read SSPGSMQMPQQS, QQQQQQQQQGSSTQEGQ, and PSSQPQASSSKPS. Positions 204-223 are enriched in polar residues; sequence ESSSQQRNETKSHPQQQVGT. Residues 301–320 show a composition bias toward low complexity; it reads ASQSPSIPISSQPASSSVVP. Composition is skewed to polar residues over residues 325–339, 347–358, 383–412, and 421–433; these read PHANSASDISGQSGS, STGSFASTSSPR, QPTNGMPSGNPLQTSANETPVLDQNASTKK, and QMQQPRQLNTPTP. Residues 445–463 are compositionally biased toward low complexity; sequence SNSSLQSGQGTQQAQQRSG. Positions 463 to 499 constitute a QLQ domain; it reads GFTKQQLHVLKAQILAFRRLKKGEGSLPPELLQAISP. Basic and acidic residues-rich tracts occupy residues 517-537 and 611-621; these read VQDRSSDKTGEDQARSLECGK and PRSDSTADKGK. Over residues 626–638 the composition is skewed to polar residues; the sequence is DGSQSKVPPQANS. The Nuclear localization signal 1 signature appears at 705–712; the sequence is LKKINGLL. Residues 726 to 795 are a coiled coil; that stretch reads VLRLQIEEKK…QKAVREKQLK (70 aa). The region spanning 993 to 1158 is the Helicase ATP-binding domain; sequence LSLYNNKLNG…WSLLNLLLPD (166 aa). An ATP-binding site is contributed by 1006–1013; it reads DEMGLGKT. Residues 1109–1129 are a coiled coil; that stretch reads DEAQRMKDRESVLARDLDRYR. The Helicase C-terminal domain occupies 1312–1489; that stretch reads ILDRILIKLQ…QYKIDMADEV (178 aa). Disordered regions lie at residues 1583 to 1775 and 1789 to 1894; these read SKKP…DEEQ and LRPR…NAGA. Residues 1608–1617 are compositionally biased toward basic residues; sequence KRGRPKSKKI. Residues 1618 to 1638 adopt a coiled-coil conformation; that stretch reads NYKEIEDDIAGYSEESSEERN. Position 1641 is a phosphoserine (Ser1641). Residues 1642–1657 are compositionally biased toward acidic residues; sequence GNEEEGDIRQFDDDEL. Positions 1821–1832 are enriched in basic and acidic residues; that stretch reads TVVDSHSSRQDQ. A compositionally biased stretch (low complexity) spans 1833-1842; sequence SDSSSRLRSV. 2 stretches are compositionally biased toward polar residues: residues 1848-1870 and 1882-1892; these read ASTSKLHVSSPKSGRLNATQLTV and DGTSPISSSNA. Residues 1895 to 2005 enclose the Bromo domain; that stretch reads RMSHIIQKRC…NLFFDLLKMS (111 aa). The Nuclear localization signal 2 signature appears at 1901-1908; the sequence is QKRCKIVI. The segment covering 2022–2032 has biased composition (polar residues); that stretch reads GSAPTLVSTPT. The segment at 2022–2193 is disordered; sequence GSAPTLVSTP…DSGKRRPSHL (172 aa). Phosphoserine is present on Ser2137. Over residues 2149–2166 the composition is skewed to polar residues; the sequence is LAQQQRWPNQPTHPNNSG.

Belongs to the SNF2/RAD54 helicase family. As to quaternary structure, interacts with SWI3B, SWI3C, H3 and H4, but not with SWI3A, SWI3D or BSH. Interacts with LFY. Interacts with REF6. Binds to FGT1. As to expression, highly expressed in inflorescences and leaves. Low expression in siliques, roots and seedlings. Detected in shoot apical meristem, root meristem, vascular tissue of developing leaves, petals, stamens filaments, anthers and carpels.

Its subcellular location is the nucleus. It carries out the reaction ATP + H2O = ADP + phosphate + H(+). ATPase subunit of a multiprotein complex equivalent of the SWI/SNF complex that acts by remodeling the chromatin by catalyzing an ATP-dependent alteration in the structure of nucleosomal DNA. Represses embryonic genes in leaves and controls shoot development and flowering. Activates flower homeotic genes. The association of BRM with its target genes requires REF6. Necessary to acquire heat stress (HS) memory, by globally binding to HS memory genes. The polypeptide is ATP-dependent helicase BRM (Arabidopsis thaliana (Mouse-ear cress)).